Here is a 502-residue protein sequence, read N- to C-terminus: Glycerol kinase (502 aa).

Thr14 serves as a coordination point for ADP. ATP-binding residues include Thr14, Thr15, and Ser16. Thr14 is a binding site for sn-glycerol 3-phosphate. Residue Arg18 participates in ADP binding. Sn-glycerol 3-phosphate is bound by residues Arg84, Glu85, and Tyr136. Glycerol is bound by residues Arg84, Glu85, and Tyr136. His232 bears the Phosphohistidine; by HPr mark. Asp246 is a binding site for sn-glycerol 3-phosphate. Residues Asp246 and Gln247 each contribute to the glycerol site. ADP contacts are provided by Thr268 and Gly311. ATP is bound by residues Thr268, Gly311, Gln315, and Gly412. ADP contacts are provided by Gly412 and Asn416.

The protein belongs to the FGGY kinase family. In terms of assembly, homotetramer and homodimer (in equilibrium). The phosphoenolpyruvate-dependent sugar phosphotransferase system (PTS), including enzyme I, and histidine-containing protein (HPr) are required for the phosphorylation, which leads to the activation of the enzyme.

It carries out the reaction glycerol + ATP = sn-glycerol 3-phosphate + ADP + H(+). It functions in the pathway polyol metabolism; glycerol degradation via glycerol kinase pathway; sn-glycerol 3-phosphate from glycerol: step 1/1. Activated by phosphorylation and inhibited by fructose 1,6-bisphosphate (FBP). Functionally, key enzyme in the regulation of glycerol uptake and metabolism. Catalyzes the phosphorylation of glycerol to yield sn-glycerol 3-phosphate. This chain is Glycerol kinase, found in Streptococcus pneumoniae (strain 70585).